Here is a 256-residue protein sequence, read N- to C-terminus: MKIITCYKCVPDEQDIAVNNADGSLDFSKADAKISQYDLNAIEAACQLKQQAVEAQVTALSVGGKALTNAKGRKDVLSRGPDELIVVIDDQFEQALPQQTASVLAAAAQKAGFDLILCGDGSSDLYAQQVGLLVGEILNIPAVNGVSKIISLTADTLTVERELEDETETLSIPLPAVVAVSTDINSPQIPSMKAILGAAKKPVQVWSAADIGFNAEAAWSEQQVAAPKQRERQRIVIEGDGEEQIAAFAENLRKVI.

Belongs to the ETF beta-subunit/FixA family. In terms of assembly, heterodimer of FixA and FixB.

It functions in the pathway amine and polyamine metabolism; carnitine metabolism. Its function is as follows. Required for anaerobic carnitine reduction. May bring reductant to CaiA. In Escherichia coli O81 (strain ED1a), this protein is Protein FixA.